The sequence spans 316 residues: uncharacterized protein (316 aa).

Residues 1 to 34 are disordered; sequence MATKRKIGDGYSSSDDNQPKRERSEGGEDQQLVP. The segment covering 17 to 26 has biased composition (basic and acidic residues); the sequence is NQPKRERSEG.

This is an uncharacterized protein from Lepidoptera (butterflies and moths).